A 249-amino-acid polypeptide reads, in one-letter code: tRNA (guanine-N(1)-)-methyltransferase (249 aa).

Residues Gly-121 and 141–146 each bind S-adenosyl-L-methionine; that span reads LGDFVL.

This sequence belongs to the RNA methyltransferase TrmD family. In terms of assembly, homodimer.

It localises to the cytoplasm. It catalyses the reaction guanosine(37) in tRNA + S-adenosyl-L-methionine = N(1)-methylguanosine(37) in tRNA + S-adenosyl-L-homocysteine + H(+). In terms of biological role, specifically methylates guanosine-37 in various tRNAs. The chain is tRNA (guanine-N(1)-)-methyltransferase from Cereibacter sphaeroides (strain ATCC 17023 / DSM 158 / JCM 6121 / CCUG 31486 / LMG 2827 / NBRC 12203 / NCIMB 8253 / ATH 2.4.1.) (Rhodobacter sphaeroides).